Reading from the N-terminus, the 302-residue chain is Protoheme IX farnesyltransferase (302 aa).

9 helical membrane-spanning segments follow: residues 27–47 (VVAL…PGMV), 53–73 (LFGL…NHVI), 100–120 (LVFA…AVNV), 121–141 (LTAV…TVFL), 149–169 (IVWG…AVTG), 175–195 (PLLL…ALAI), 215–235 (VAFT…VSLV), 237–257 (FIIH…GIGF), and 273–293 (AMPT…LLLV).

It belongs to the UbiA prenyltransferase family. Protoheme IX farnesyltransferase subfamily.

The protein localises to the cell inner membrane. The catalysed reaction is heme b + (2E,6E)-farnesyl diphosphate + H2O = Fe(II)-heme o + diphosphate. It functions in the pathway porphyrin-containing compound metabolism; heme O biosynthesis; heme O from protoheme: step 1/1. In terms of biological role, converts heme B (protoheme IX) to heme O by substitution of the vinyl group on carbon 2 of heme B porphyrin ring with a hydroxyethyl farnesyl side group. The sequence is that of Protoheme IX farnesyltransferase from Thioalkalivibrio sulfidiphilus (strain HL-EbGR7).